Reading from the N-terminus, the 477-residue chain is Glutamyl-tRNA(Gln) amidotransferase subunit A (477 aa).

Catalysis depends on charge relay system residues lysine 76 and serine 151. Catalysis depends on serine 175, which acts as the Acyl-ester intermediate.

The protein belongs to the amidase family. GatA subfamily. Heterotrimer of A, B and C subunits.

The enzyme catalyses L-glutamyl-tRNA(Gln) + L-glutamine + ATP + H2O = L-glutaminyl-tRNA(Gln) + L-glutamate + ADP + phosphate + H(+). In terms of biological role, allows the formation of correctly charged Gln-tRNA(Gln) through the transamidation of misacylated Glu-tRNA(Gln) in organisms which lack glutaminyl-tRNA synthetase. The reaction takes place in the presence of glutamine and ATP through an activated gamma-phospho-Glu-tRNA(Gln). This Prosthecochloris aestuarii (strain DSM 271 / SK 413) protein is Glutamyl-tRNA(Gln) amidotransferase subunit A.